We begin with the raw amino-acid sequence, 392 residues long: MQLRKLLLPGLLSVTLLSGCSLFNSEEDVVKMSPLPTVENQFTPTTAWSTSVGSGIGNFYSNLHPALADNVVYAADRAGLVKALNADDGKEIWSVSLAEKDGWFSKEPALLSGGVTVSGGHVYIGSEKAQVYALNTSDGTVAWQTKVAGEALSRPVVSDGLVLIHTSNGQLQALNEADGAVKWTVNLDMPSLSLRGESAPTTAFGAAVVGGDNGRVSAVLMEQGQMIWQQRISQATGSTEIDRLSDVDTTPVVVNGVVFALAYNGNLTALDLRSGQIMWKRELGSVNDFIVDGNRIYLVDQNDRVMALTIDGGVTLWTQSDLLHRLLTSPVLYNGNLVVGDSEGYLHWINVEDGRFVAQQKVDSSGFQTEPVAADGKLLIQAKDGTVYSITR.

A signal peptide spans Met-1–Gly-19. The N-palmitoyl cysteine moiety is linked to residue Cys-20. Cys-20 carries the S-diacylglycerol cysteine lipid modification.

The protein belongs to the BamB family. Part of the Bam complex, which is composed of the outer membrane protein BamA, and four lipoproteins BamB, BamC, BamD and BamE. Monomer. Interacts directly with BamA. The Bam complex has the shape of a hat, with the BamA beta-barrel crown in the outer membrane and the periplasmic brim formed by the BamA POTRA domains and the 4 lipoproteins.

The protein resides in the cell outer membrane. Its function is as follows. Part of the outer membrane protein assembly complex (Bam), which is involved in assembly and insertion of beta-barrel proteins into the outer membrane. Nonessential member of the complex, which may orient the flexible periplasmic domain of BamA for interaction with other Bam components, chaperones and nascent outer membrane proteins. Efficient substrate folding and insertion into the outer membrane requires all 5 subunits. A lateral gate may open between the first and last strands of the BamA beta-barrel that allows substrate to insert into the outer membrane; comparison of the structures of complete and nearly complete Bam complexes show there is considerable movement of all 5 proteins. The sequence is that of Outer membrane protein assembly factor BamB from Escherichia coli (strain K12).